The chain runs to 490 residues: Arginine decarboxylase (490 aa).

Position 226 is an N6-(pyridoxal phosphate)lysine (Lys-226).

The protein belongs to the Orn/Lys/Arg decarboxylase class-I family. Requires pyridoxal 5'-phosphate as cofactor.

It localises to the cytoplasm. It carries out the reaction L-arginine + H(+) = agmatine + CO2. It participates in amine and polyamine biosynthesis; agmatine biosynthesis; agmatine from L-arginine: step 1/1. Its function is as follows. Catalyzes the formation of agmatine from arginine. The sequence is that of Arginine decarboxylase (speA) from Bacillus subtilis (strain 168).